A 157-amino-acid chain; its full sequence is Endoribonuclease YbeY (157 aa).

His-114, His-118, and His-124 together coordinate Zn(2+).

Belongs to the endoribonuclease YbeY family. The cofactor is Zn(2+).

It is found in the cytoplasm. Its function is as follows. Single strand-specific metallo-endoribonuclease involved in late-stage 70S ribosome quality control and in maturation of the 3' terminus of the 16S rRNA. The chain is Endoribonuclease YbeY from Yersinia pestis.